The primary structure comprises 61 residues: UPF0434 protein PA14_25520 (61 aa).

The protein belongs to the UPF0434 family.

The polypeptide is UPF0434 protein PA14_25520 (Pseudomonas aeruginosa (strain UCBPP-PA14)).